The sequence spans 500 residues: Lysine--tRNA ligase (500 aa).

Residues Glu410 and Glu417 each contribute to the Mg(2+) site.

The protein belongs to the class-II aminoacyl-tRNA synthetase family. In terms of assembly, homodimer. Requires Mg(2+) as cofactor.

The protein resides in the cytoplasm. The catalysed reaction is tRNA(Lys) + L-lysine + ATP = L-lysyl-tRNA(Lys) + AMP + diphosphate. This Mycoplasma mycoides subsp. mycoides SC (strain CCUG 32753 / NCTC 10114 / PG1) protein is Lysine--tRNA ligase.